The sequence spans 292 residues: Probable endonuclease 4 (292 aa).

9 residues coordinate Zn(2+): His-69, His-109, Glu-145, Asp-179, His-182, His-216, Asp-229, His-231, and Glu-261.

The protein belongs to the AP endonuclease 2 family. Zn(2+) serves as cofactor.

It carries out the reaction Endonucleolytic cleavage to 5'-phosphooligonucleotide end-products.. Endonuclease IV plays a role in DNA repair. It cleaves phosphodiester bonds at apurinic or apyrimidinic (AP) sites, generating a 3'-hydroxyl group and a 5'-terminal sugar phosphate. This Desulfotalea psychrophila (strain LSv54 / DSM 12343) protein is Probable endonuclease 4.